The following is a 336-amino-acid chain: TBC1 domain family member 21 (336 aa).

The region spanning 57 to 265 (GLHPFVRTEA…RLWEVLLTGK (209 aa)) is the Rab-GAP TBC domain.

As to quaternary structure, interacts with ACTB. Interacts with ARMC12. Interacts with TOMM20 and DNAH7. Interacts with RAP1A. Interacts with RAB10. Expressed in testis, specifically in elongating and elongated spermatids (at protein level). Expressed in the sperm midpiece (at protein level).

It is found in the cytoplasmic vesicle. It localises to the secretory vesicle. Its subcellular location is the acrosome. The protein localises to the cytoplasm. The protein resides in the cytoskeleton. Its function is as follows. Acts as a GTPase-activating protein for Rab family protein (s). Essential for the establishment of male fertility, and is required for both the production of normal sperm number and sperm function. Plays an important role in the formation of intact mitochondria, outer dense fibers and axoneme within the sperm tail. Essential for sperm mitochondrial sheath formation and for the interactions of ARMC12 with VDAC2 and VDAC3. May be involved in acrosome formation and cytoskeletal reorganization during spermiogenesis, possibly by regulating RAB3A activity. The polypeptide is TBC1 domain family member 21 (Mus musculus (Mouse)).